Reading from the N-terminus, the 387-residue chain is 3-hydroxy-D-aspartate aldolase (387 aa).

Position 62 is an N6-(pyridoxal phosphate)lysine (lysine 62). Glutamine 85 serves as a coordination point for pyridoxal 5'-phosphate. The tract at residues 199–228 is disordered; the sequence is HGQLRGPQGQAGRRHCPGERGRGRAGGRGL. Residues threonine 238, 256–257, and tyrosine 265 each bind pyridoxal 5'-phosphate; that span reads GS. The Mg(2+) site is built by histidine 355 and aspartate 357.

Belongs to the DSD1 family. As to quaternary structure, homodimer. Pyridoxal 5'-phosphate serves as cofactor. The cofactor is Mn(2+). Requires Mg(2+) as cofactor. Co(2+) is required as a cofactor.

It catalyses the reaction (3S)-3-hydroxy-D-aspartate = glyoxylate + glycine. It carries out the reaction (3R)-3-hydroxy-D-aspartate = glyoxylate + glycine. Functionally, catalyzes the condensation of glyoxylate and glycine into (2R,3S)-beta-hydroxyaspartate ((3S)-3-hydroxy-D-aspartate). Functions in glyoxylate assimilation via the beta-hydroxyaspartate cycle (BHAC). In vitro catalyzes the cleavage of both D-erythro- and D-threo-3-hydroxyaspartate to glycine and glyoxylate. Also acts on D-threonine, D-3-phenylserine and D-3-3,4-methylenedioxyphenylserine. This is 3-hydroxy-D-aspartate aldolase (dhaa) from Paracoccus denitrificans.